The following is a 229-amino-acid chain: Large ribosomal subunit protein uL1 (229 aa).

It belongs to the universal ribosomal protein uL1 family. Part of the 50S ribosomal subunit.

In terms of biological role, binds directly to 23S rRNA. The L1 stalk is quite mobile in the ribosome, and is involved in E site tRNA release. Protein L1 is also a translational repressor protein, it controls the translation of the L11 operon by binding to its mRNA. This Mycoplasmopsis pulmonis (strain UAB CTIP) (Mycoplasma pulmonis) protein is Large ribosomal subunit protein uL1.